The primary structure comprises 316 residues: 4-hydroxy-3-methylbut-2-enyl diphosphate reductase (316 aa).

Cysteine 12 is a [4Fe-4S] cluster binding site. Residues histidine 41 and histidine 74 each coordinate (2E)-4-hydroxy-3-methylbut-2-enyl diphosphate. The dimethylallyl diphosphate site is built by histidine 41 and histidine 74. Isopentenyl diphosphate is bound by residues histidine 41 and histidine 74. Position 96 (cysteine 96) interacts with [4Fe-4S] cluster. (2E)-4-hydroxy-3-methylbut-2-enyl diphosphate is bound at residue histidine 124. Histidine 124 is a dimethylallyl diphosphate binding site. Histidine 124 lines the isopentenyl diphosphate pocket. The Proton donor role is filled by glutamate 126. A (2E)-4-hydroxy-3-methylbut-2-enyl diphosphate-binding site is contributed by threonine 169. Cysteine 199 serves as a coordination point for [4Fe-4S] cluster. The (2E)-4-hydroxy-3-methylbut-2-enyl diphosphate site is built by serine 227, serine 228, asparagine 229, and serine 271. Dimethylallyl diphosphate contacts are provided by serine 227, serine 228, asparagine 229, and serine 271. The isopentenyl diphosphate site is built by serine 227, serine 228, asparagine 229, and serine 271.

It belongs to the IspH family. It depends on [4Fe-4S] cluster as a cofactor.

It carries out the reaction isopentenyl diphosphate + 2 oxidized [2Fe-2S]-[ferredoxin] + H2O = (2E)-4-hydroxy-3-methylbut-2-enyl diphosphate + 2 reduced [2Fe-2S]-[ferredoxin] + 2 H(+). The enzyme catalyses dimethylallyl diphosphate + 2 oxidized [2Fe-2S]-[ferredoxin] + H2O = (2E)-4-hydroxy-3-methylbut-2-enyl diphosphate + 2 reduced [2Fe-2S]-[ferredoxin] + 2 H(+). The protein operates within isoprenoid biosynthesis; dimethylallyl diphosphate biosynthesis; dimethylallyl diphosphate from (2E)-4-hydroxy-3-methylbutenyl diphosphate: step 1/1. It participates in isoprenoid biosynthesis; isopentenyl diphosphate biosynthesis via DXP pathway; isopentenyl diphosphate from 1-deoxy-D-xylulose 5-phosphate: step 6/6. Its function is as follows. Catalyzes the conversion of 1-hydroxy-2-methyl-2-(E)-butenyl 4-diphosphate (HMBPP) into a mixture of isopentenyl diphosphate (IPP) and dimethylallyl diphosphate (DMAPP). Acts in the terminal step of the DOXP/MEP pathway for isoprenoid precursor biosynthesis. The protein is 4-hydroxy-3-methylbut-2-enyl diphosphate reductase of Xanthomonas axonopodis pv. citri (strain 306).